A 622-amino-acid chain; its full sequence is uncharacterized protein (622 aa).

[4Fe-4S] cluster-binding residues include cysteine 302, cysteine 306, cysteine 310, and cysteine 521.

This sequence belongs to the AOR/FOR family. It depends on [4Fe-4S] cluster as a cofactor.

This is an uncharacterized protein from Methanocaldococcus jannaschii (strain ATCC 43067 / DSM 2661 / JAL-1 / JCM 10045 / NBRC 100440) (Methanococcus jannaschii).